A 117-amino-acid chain; its full sequence is Large ribosomal subunit protein uL18 (117 aa).

The protein belongs to the universal ribosomal protein uL18 family. In terms of assembly, part of the 50S ribosomal subunit; part of the 5S rRNA/L5/L18/L25 subcomplex. Contacts the 5S and 23S rRNAs.

Its function is as follows. This is one of the proteins that bind and probably mediate the attachment of the 5S RNA into the large ribosomal subunit, where it forms part of the central protuberance. The chain is Large ribosomal subunit protein uL18 from Francisella philomiragia subsp. philomiragia (strain ATCC 25017 / CCUG 19701 / FSC 153 / O#319-036).